We begin with the raw amino-acid sequence, 621 residues long: uncharacterized protein (621 aa).

A signal peptide spans 1-15 (MRRSVCYVTPSVARA).

This sequence belongs to the chlamydial CPn_0512/CT_425/TC_0708 family.

This is an uncharacterized protein from Chlamydia trachomatis serovar D (strain ATCC VR-885 / DSM 19411 / UW-3/Cx).